The primary structure comprises 301 residues: NADH-cytochrome b5 reductase 2 (301 aa).

A helical transmembrane segment spans residues 14-30 (FLVPFAGATALSIGLAL). The 105-residue stretch at 51–155 (NEWVDLKLSK…KGPIVKWKWE (105 aa)) folds into the FAD-binding FR-type domain. 158–193 (QFKSIALIGGGTGITPLYQLLHQITSNPKDNTKVNL) contributes to the FAD binding site.

This sequence belongs to the flavoprotein pyridine nucleotide cytochrome reductase family. FAD is required as a cofactor.

It is found in the mitochondrion outer membrane. It carries out the reaction 2 Fe(III)-[cytochrome b5] + NADH = 2 Fe(II)-[cytochrome b5] + NAD(+) + H(+). Functionally, may mediate the reduction of outer membrane cytochrome b5. The protein is NADH-cytochrome b5 reductase 2 (MCR1) of Candida albicans (strain SC5314 / ATCC MYA-2876) (Yeast).